Consider the following 337-residue polypeptide: Carbonic anhydrase 14 (337 aa).

The signal sequence occupies residues 1–15; it reads MLFSALLLEVIWILA. Topologically, residues 16 to 290 are extracellular; that stretch reads ADGGQHWTYE…AGSSYTTGEM (275 aa). The region spanning 20-278 is the Alpha-carbonic anhydrase domain; the sequence is QHWTYEGPHG…LNQRMVFASF (259 aa). The cysteines at positions 40 and 221 are disulfide-linked. The active-site Proton donor/acceptor is the His84. Zn(2+) is bound by residues His109, His111, and His135. Residue Asn213 is glycosylated (N-linked (GlcNAc...) asparagine). Residue 217–218 coordinates substrate; it reads TT. A helical membrane pass occupies residues 291–311; it reads LSLGVGILVGCLCLLLAVYFI. The Cytoplasmic segment spans residues 312-337; it reads ARKIRKKRLENRKSVVFTSAQATTEA. The residue at position 325 (Ser325) is a Phosphoserine.

It belongs to the alpha-carbonic anhydrase family. Requires Zn(2+) as cofactor. High expression in all parts of the central nervous system and lower expression in adult liver, heart, small intestine, colon, kidney, urinary bladder and skeletal muscle.

The protein localises to the membrane. It carries out the reaction hydrogencarbonate + H(+) = CO2 + H2O. Its activity is regulated as follows. Activated by histamine, L-adrenaline, L- and D-histidine, and L- and D-phenylalanine. Inhibited by coumarins, saccharin, sulfonamide derivatives such as acetazolamide (AZA) and Foscarnet (phosphonoformate trisodium salt). Reversible hydration of carbon dioxide. The protein is Carbonic anhydrase 14 (CA14) of Homo sapiens (Human).